The chain runs to 322 residues: GTP 3',8-cyclase (322 aa).

One can recognise a Radical SAM core domain in the interval 5–217; that stretch reads SYGRVIDYLR…NIIAQKYSFK (213 aa). Position 14 (R14) interacts with GTP. Residues C21 and C25 each contribute to the [4Fe-4S] cluster site. Y27 contributes to the S-adenosyl-L-methionine binding site. C28 is a [4Fe-4S] cluster binding site. Residue R64 coordinates GTP. S-adenosyl-L-methionine is bound at residue G68. T95 provides a ligand contact to GTP. S119 provides a ligand contact to S-adenosyl-L-methionine. K155 contributes to the GTP binding site. An S-adenosyl-L-methionine-binding site is contributed by M189. Residues C249 and C252 each coordinate [4Fe-4S] cluster. 254–256 serves as a coordination point for GTP; it reads RIR. Residue C266 participates in [4Fe-4S] cluster binding.

It belongs to the radical SAM superfamily. MoaA family. Monomer and homodimer. Requires [4Fe-4S] cluster as cofactor.

The catalysed reaction is GTP + AH2 + S-adenosyl-L-methionine = (8S)-3',8-cyclo-7,8-dihydroguanosine 5'-triphosphate + 5'-deoxyadenosine + L-methionine + A + H(+). Its pathway is cofactor biosynthesis; molybdopterin biosynthesis. Catalyzes the cyclization of GTP to (8S)-3',8-cyclo-7,8-dihydroguanosine 5'-triphosphate. This is GTP 3',8-cyclase from Campylobacter lari (strain RM2100 / D67 / ATCC BAA-1060).